Reading from the N-terminus, the 520-residue chain is Laccase-4 (520 aa).

The first 18 residues, 1–18, serve as a signal peptide directing secretion; it reads MGRFSSLCALTAVIHSFG. 3 Plastocyanin-like domains span residues 24-149, 161-303, and 370-491; these read IGPV…MVVY, VDDE…ILRY, and TVPV…FSED. Asn-73 and Asn-76 each carry an N-linked (GlcNAc...) asparagine glycan. The Cu cation site is built by His-86, His-88, His-131, and His-133. Cystine bridges form between Cys-107-Cys-509 and Cys-139-Cys-227. 2 N-linked (GlcNAc...) asparagine glycosylation sites follow: Asn-239 and Asn-399. 7 residues coordinate Cu cation: His-418, His-421, His-423, His-473, Cys-474, His-475, and His-479. The N-linked (GlcNAc...) asparagine glycan is linked to Asn-497.

The protein belongs to the multicopper oxidase family. In terms of assembly, homodimer. It depends on Cu cation as a cofactor.

The protein resides in the secreted. The catalysed reaction is 4 hydroquinone + O2 = 4 benzosemiquinone + 2 H2O. Functionally, lignin degradation and detoxification of lignin-derived products. The polypeptide is Laccase-4 (LCC4) (Trametes villosa (White-rot fungus)).